The following is a 329-amino-acid chain: Olfactory receptor 5AL1 (329 aa).

The Extracellular segment spans residues 1-44 (MCALKGFLEENFYTYSVAKGNHSTVYEFILLGLTDNAELQVTLF). Residue N21 is glycosylated (N-linked (GlcNAc...) asparagine). The chain crosses the membrane as a helical span at residues 45 to 65 (GIFLVVYLASFMGNFGLIMLI). At 66-73 (QISPQLHT) the chain is on the cytoplasmic side. Residues 74–94 (PMYFFLSHLAFVDFSFTSSVA) form a helical membrane-spanning segment. The Extracellular segment spans residues 95-113 (PNTLVNFLCEVKSITFYAC). Cysteines 113 and 205 form a disulfide. The chain crosses the membrane as a helical span at residues 114–134 (AIQVCCFITFVVCELYLLSIM). The Cytoplasmic segment spans residues 135–157 (AYDRYVAICNPLLYVILIPRKLC). A helical membrane pass occupies residues 158–178 (IKLIASTYVYGFTVGLVQTVA). The Extracellular segment spans residues 179-220 (TSYLSFCDSNVINHFYHDDVPLVALACSDTHVKELMLLIIAG). A helical transmembrane segment spans residues 221–241 (FNTLCSLVIVLISYGFIFFAI). The Cytoplasmic segment spans residues 242-253 (LRIHSAEGRQKA). The helical transmembrane segment at 254–274 (FSTSASHLTSITIFYGTIIFM) threads the bilayer. The Extracellular portion of the chain corresponds to 275–287 (YPQPKSSHSLNMD). The chain crosses the membrane as a helical span at residues 288–308 (KVASVFNVVVIPTLNPLIYSL). At 309–329 (RNQEVKNALKRIIEKLCLAVK) the chain is on the cytoplasmic side.

It belongs to the G-protein coupled receptor 1 family.

It is found in the cell membrane. In terms of biological role, odorant receptor. This Homo sapiens (Human) protein is Olfactory receptor 5AL1 (OR5AL1).